Reading from the N-terminus, the 422-residue chain is Probable isoprenylcysteine alpha-carbonyl methylesterase ICMEL2 (422 aa).

The span at 1-16 (MQLSPERCRPMSENRE) shows a compositional bias: basic and acidic residues. The disordered stretch occupies residues 1–55 (MQLSPERCRPMSENREAWSANSEEMELLHGSNRLSSPEHVRRRVSGNSSEDGSPR). The next 2 helical transmembrane spans lie at 97 to 117 (LLAL…VAYL) and 152 to 172 (VVVF…GSLL). Residues 158 to 160 (GGA) and 229 to 231 (QSA) each bind substrate. Catalysis depends on residues Ser-230, Asp-331, and His-363.

It belongs to the AB hydrolase superfamily. Isoprenylcysteine methylesterase family. In terms of tissue distribution, expressed at low levels in flowers and siliques.

The protein localises to the endoplasmic reticulum membrane. It localises to the golgi apparatus membrane. The catalysed reaction is [protein]-C-terminal S-[(2E,6E)-farnesyl]-L-cysteine methyl ester + H2O = [protein]-C-terminal S-[(2E,6E)-farnesyl]-L-cysteine + methanol + H(+). In terms of biological role, catalyzes the demethylation of isoprenylcysteine methylesters. May act as a negative regulator of ABA signaling. The polypeptide is Probable isoprenylcysteine alpha-carbonyl methylesterase ICMEL2 (Arabidopsis thaliana (Mouse-ear cress)).